The following is an 89-amino-acid chain: Dynein light chain 1, cytoplasmic (89 aa).

It belongs to the dynein light chain family. In terms of assembly, interacts with mett-10; the interaction is direct, and is required for the nuclear localization of mett-10. Component of a dynein-regulating complex composed of at least bicd-1, dlc-1 and egal-1. Interacts with egal-1 and unc-83. Interacts with fbf-2. Broadly expressed in tissues including the intestine, body wall muscles, germs cells, oocytes, the rectal valve and cells in the head.

The protein localises to the cytoplasm. It localises to the cytoskeleton. The protein resides in the nucleus envelope. Its subcellular location is the cytoplasmic granule. Functionally, acts as a non-catalytic accessory component of a dynein complex. Part of a complex with bicd-1 and egal-1, which is recruited to the nuclear envelope by unc-83, where in turn, it recruits dynein to the nuclear surface and regulates nuclear migrations in hypodermal precursor cells. Probably within a dynein motor complex, plays a role in the cell fate specification of the germline and oogenesis. In particular, it inhibits germ cell proliferation. Regulates the function and localization of the RNA-binding protein fbf-2 in the germline. Plays a role in mitotic and meiotic processes. Involved in the pairing of homologous chromosomes. Independently of its dynein-mediated functions, plays a role in germ cell apoptosis. This chain is Dynein light chain 1, cytoplasmic, found in Caenorhabditis elegans.